Consider the following 91-residue polypeptide: Small integral membrane protein 13 (91 aa).

Residues 10–30 (LVFVATLLIVLLLMVCGWYFV) traverse the membrane as a helical segment. The tract at residues 47 to 91 (DTGSQEGDHEPSGSETEEDTSSSPHRIRSARQRRAPADEGHRPLT) is disordered. Phosphoserine is present on residues Ser58 and Ser60. The residue at position 62 (Thr62) is a Phosphothreonine. Ser69 carries the post-translational modification Phosphoserine. The segment covering 71 to 80 (HRIRSARQRR) has biased composition (basic residues). Over residues 81 to 91 (APADEGHRPLT) the composition is skewed to basic and acidic residues.

It belongs to the SMIM13 family.

The protein resides in the membrane. This is Small integral membrane protein 13 (SMIM13) from Homo sapiens (Human).